The following is a 354-amino-acid chain: Methylthioribose-1-phosphate isomerase (354 aa).

Substrate is bound by residues 58–60 (RGA), R101, and Q204. D245 functions as the Proton donor in the catalytic mechanism. 255–256 (NK) provides a ligand contact to substrate.

This sequence belongs to the eIF-2B alpha/beta/delta subunits family. MtnA subfamily.

It catalyses the reaction 5-(methylsulfanyl)-alpha-D-ribose 1-phosphate = 5-(methylsulfanyl)-D-ribulose 1-phosphate. It functions in the pathway amino-acid biosynthesis; L-methionine biosynthesis via salvage pathway; L-methionine from S-methyl-5-thio-alpha-D-ribose 1-phosphate: step 1/6. In terms of biological role, catalyzes the interconversion of methylthioribose-1-phosphate (MTR-1-P) into methylthioribulose-1-phosphate (MTRu-1-P). The polypeptide is Methylthioribose-1-phosphate isomerase (Xanthomonas oryzae pv. oryzae (strain MAFF 311018)).